Reading from the N-terminus, the 108-residue chain is VQ motif-containing protein 10 (108 aa).

A VQ motif is present at residues F29–G38. Positions I65–T85 are disordered. The span at H73–M82 shows a compositional bias: gly residues.

In terms of assembly, interacts with WRKY25, WRKY26 and WRKY33.

Its subcellular location is the nucleus. May modulate WRKY transcription factor activities. The protein is VQ motif-containing protein 10 of Arabidopsis thaliana (Mouse-ear cress).